The chain runs to 333 residues: Gap junction alpha-4 protein (333 aa).

Residues 1–20 (MGDWGFLEKLLDQVQEHSTV) are Cytoplasmic-facing. The helical transmembrane segment at 21–40 (VGKIWLTVLFIFRILILGLA) threads the bilayer. Over 41-76 (GESVWGDEQSDFECNTAQPGCTNVCYDQAFPISHIR) the chain is Extracellular. A helical membrane pass occupies residues 77-99 (YWVLQFLFVSTPTLVYLGHVIYL). At 100–148 (SRREERLRQKEGELRALPAKDPQVERALAAVERQMAKISVAEDGRLRIR) the chain is on the cytoplasmic side. The helical transmembrane segment at 149 to 165 (GALMGTYVASVLCKSVL) threads the bilayer. Residues 166–207 (EAGFLYGQWRLYGWTMEPVFVCQRAPCPYLVDCFVSRPTEKT) are Extracellular-facing. Residues 208 to 230 (IFIIFMLVVGLISLVLNLLELVH) traverse the membrane as a helical segment. Topologically, residues 231–333 (LLCRCLSRGM…SSSASKKQYV (103 aa)) are cytoplasmic. Positions 292–333 (ANLTTEERLASSRPPLFLDPPPQNGQKPPSRPSSSASKKQYV) are disordered. The segment covering 323 to 333 (PSSSASKKQYV) has biased composition (low complexity).

This sequence belongs to the connexin family. Alpha-type (group II) subfamily. A connexon is composed of a hexamer of connexins. Expressed in multiple organs and tissues, including heart, uterus, ovary, and blood vessel endothelium.

The protein resides in the cell membrane. The protein localises to the cell junction. Its subcellular location is the gap junction. In terms of biological role, one gap junction consists of a cluster of closely packed pairs of transmembrane channels, the connexons, through which materials of low MW diffuse from one cell to a neighboring cell. In Homo sapiens (Human), this protein is Gap junction alpha-4 protein (GJA4).